A 233-amino-acid chain; its full sequence is Choline-phosphate cytidylyltransferase (233 aa).

The CDP-choline site is built by Leu6, Ala8, Gly9, Tyr80, Ser85, and Ala101. Position 102 (Asp102) interacts with Mg(2+). Position 187 (Tyr187) interacts with CDP-choline. Mg(2+)-binding residues include Glu213 and Asp215.

It belongs to the LicC/PntC cytidylyltransferase family. It depends on Mg(2+) as a cofactor.

The catalysed reaction is phosphocholine + CTP + H(+) = CDP-choline + diphosphate. Its pathway is lipopolysaccharide biosynthesis. In terms of biological role, cytidylyltransferase involved in the biosynthesis of lipopolysaccharides (LPS), a necessary component and antigenic determinant of the outer membrane that has been shown to be an important factor in the host-parasite interaction in a number of Gram-negative species. Catalyzes the activation of phosphocholine (P-Cho) to CDP-choline (CDP-Cho). LicC is critical for the expression of the 6A2-specific epitope. In Haemophilus influenzae (strain ATCC 51907 / DSM 11121 / KW20 / Rd), this protein is Choline-phosphate cytidylyltransferase.